Here is a 434-residue protein sequence, read N- to C-terminus: Cobyrinate a,c-diamide synthase (434 aa).

Residues 240–430 (KAYVAYDSAF…SHFHFSRTRR (191 aa)) enclose the GATase cobBQ-type domain. Catalysis depends on Cys322, which acts as the Nucleophile.

The protein belongs to the CobB/CbiA family. Mg(2+) is required as a cofactor.

The enzyme catalyses cob(II)yrinate + 2 L-glutamine + 2 ATP + 2 H2O = cob(II)yrinate a,c diamide + 2 L-glutamate + 2 ADP + 2 phosphate + 2 H(+). Its pathway is cofactor biosynthesis; adenosylcobalamin biosynthesis; cob(II)yrinate a,c-diamide from sirohydrochlorin (anaerobic route): step 10/10. Catalyzes the ATP-dependent amidation of the two carboxylate groups at positions a and c of cobyrinate, using either L-glutamine or ammonia as the nitrogen source. This chain is Cobyrinate a,c-diamide synthase, found in Sulfolobus acidocaldarius (strain ATCC 33909 / DSM 639 / JCM 8929 / NBRC 15157 / NCIMB 11770).